Here is a 309-residue protein sequence, read N- to C-terminus: Ras-like protein 1 (309 aa).

GTP is bound by residues 20 to 25, 36 to 42, 66 to 67, 123 to 126, and 153 to 155; these read GVGKSA, VDEYDPT, AG, NKLD, and SAK. An Effector region motif is present at residues 39-47; sequence YDPTIEDSY. Positions 177–303 are disordered; it reads KYNSMNRQLD…SANARKESSG (127 aa). 2 stretches are compositionally biased toward polar residues: residues 179-188 and 209-235; these read NSMNRQLDNT and NGSY…NHNG. A compositionally biased stretch (basic and acidic residues) spans 236–245; sequence ETTKRTDEKN. A compositionally biased stretch (low complexity) spans 246-256; sequence YVNQNNNNEGN. Residues 257–296 are compositionally biased toward polar residues; the sequence is TKYSSNGNGNRSDISRGNQNNALNSRSKQSAEPQKNSSAN. Residue C305 is the site of S-palmitoyl cysteine attachment. A Cysteine methyl ester modification is found at C306. C306 carries S-farnesyl cysteine lipidation. A propeptide spans 307–309 (removed in mature form); that stretch reads IIC.

The protein belongs to the small GTPase superfamily. Ras family. Farnesylated by RAM1-RAM2, which is required for targeting RAS1 to the cytoplasmic site of the endoplasmic reticulum, where proteolytic processing of the C-terminus by RCE1 and methylation of the resulting carboxyl group by STE14 occurs. Post-translationally, palmitoylated by the ERF2-SHR5 complex, which is required for proper plasma membrane localization of RAS1.

The protein localises to the cell membrane. It carries out the reaction GTP + H2O = GDP + phosphate + H(+). Its activity is regulated as follows. Alternates between an inactive form bound to GDP and an active form bound to GTP. Activated by guanine nucleotide-exchange factor (GEF) CDC25 and inactivated by GTPase-activating proteins (GAPs) IRA1 and IRA2. The S.cerevisiae Ras proteins modulate the activity of the adenylate cyclase catalytic subunit and therefore affect the biosynthesis of cyclic-AMP. The protein is Ras-like protein 1 (RAS1) of Saccharomyces cerevisiae (strain ATCC 204508 / S288c) (Baker's yeast).